The chain runs to 371 residues: Anhydro-N-acetylmuramic acid kinase (371 aa).

Position 10 to 17 (10 to 17) interacts with ATP; sequence GTSLDGID.

Belongs to the anhydro-N-acetylmuramic acid kinase family.

The catalysed reaction is 1,6-anhydro-N-acetyl-beta-muramate + ATP + H2O = N-acetyl-D-muramate 6-phosphate + ADP + H(+). The protein operates within amino-sugar metabolism; 1,6-anhydro-N-acetylmuramate degradation. It functions in the pathway cell wall biogenesis; peptidoglycan recycling. Its function is as follows. Catalyzes the specific phosphorylation of 1,6-anhydro-N-acetylmuramic acid (anhMurNAc) with the simultaneous cleavage of the 1,6-anhydro ring, generating MurNAc-6-P. Is required for the utilization of anhMurNAc either imported from the medium or derived from its own cell wall murein, and thus plays a role in cell wall recycling. This Chromohalobacter salexigens (strain ATCC BAA-138 / DSM 3043 / CIP 106854 / NCIMB 13768 / 1H11) protein is Anhydro-N-acetylmuramic acid kinase.